We begin with the raw amino-acid sequence, 465 residues long: Cysteine--tRNA ligase (465 aa).

Cys-29 is a binding site for Zn(2+). The 'HIGH' region motif lies at 31-41 (ITPYDEVHLGH). The Zn(2+) site is built by Cys-212, His-237, and Glu-241. A 'KMSKS' region motif is present at residues 269–273 (KMSKS). Lys-272 contributes to the ATP binding site.

Belongs to the class-I aminoacyl-tRNA synthetase family. Monomer. The cofactor is Zn(2+).

It is found in the cytoplasm. The catalysed reaction is tRNA(Cys) + L-cysteine + ATP = L-cysteinyl-tRNA(Cys) + AMP + diphosphate. The protein is Cysteine--tRNA ligase of Endomicrobium trichonymphae.